The chain runs to 628 residues: Leucine-rich repeat and fibronectin type-III domain-containing protein 3 (628 aa).

The N-terminal stretch at 1–16 (MAVLPLLLCLLPLAPA) is a signal peptide. Residues 17–540 (SSPSQPATPS…APHAPFLGGT (524 aa)) lie on the Extracellular side of the membrane. Residues 19–59 (PSQPATPSPCPRRCRCQTQSLPLSVLCPGAGLLFVPPSLDR) enclose the LRRNT domain. LRR repeat units lie at residues 84 to 105 (GLLH…AFAD), 108 to 129 (ALRA…QLRG), 132 to 153 (NLRH…ALDD), 157 to 178 (TLED…ALGR), 181 to 202 (NVNT…AFSR), and 205 to 226 (KLAR…PLFS). The region spanning 249 to 295 (NPLHCNCELVWLRRLAREDDLEACASPPALGGRYFWAVGEEEFVCEP) is the LRRCT domain. Residues 295 to 382 (PPVVTHRSPP…GEATAAVELT (88 aa)) form the Ig-like domain. A disulfide bridge connects residues Cys-317 and Cys-366. N-linked (GlcNAc...) asparagine glycosylation is found at Asn-348 and Asn-393. The interval 380-432 (ELTVGPPPPPQLANSTSCDPPRDGDPDALTPPSAASASAAAKAADTGPPTDRG) is disordered. Low complexity predominate over residues 406–429 (DALTPPSAASASAAAKAADTGPPT). Residues 427-525 (PPTDRGVQVT…GCARFSTEPA (99 aa)) enclose the Fibronectin type-III domain. The chain crosses the membrane as a helical span at residues 541-561 (MIIALGGVIVASVLVFIFVLL). Topologically, residues 562-628 (MRYKVHGGQP…WRPSHEPTGP (67 aa)) are cytoplasmic. Positions 587 to 628 (QTNGSLGPTPAPPAPEPAAPRAHTVVQLDCEPWRPSHEPTGP) are disordered. The segment covering 595-604 (TPAPPAPEPA) has biased composition (pro residues). Basic and acidic residues predominate over residues 617 to 628 (EPWRPSHEPTGP).

The protein belongs to the LRFN family. As to quaternary structure, can form heteromeric complexes with LRFN1, LRFN2, LRFN4 and LRFN5. Able to form homomeric complexes across cell junctions, between adjacent cells. Does not interact with DLG4. Post-translationally, N-glycosylated.

The protein resides in the cell membrane. Its subcellular location is the cell projection. It is found in the axon. The protein localises to the dendrite. It localises to the synapse. The protein resides in the presynaptic cell membrane. Its subcellular location is the postsynaptic cell membrane. Its function is as follows. Cell adhesion molecule that mediates homophilic cell-cell adhesion in a Ca(2+)-independent manner. Promotes neurite outgrowth in hippocampal neurons. The chain is Leucine-rich repeat and fibronectin type-III domain-containing protein 3 (LRFN3) from Ailuropoda melanoleuca (Giant panda).